The primary structure comprises 97 residues: UPF0213 protein BLi00048/BL00536 (97 aa).

Positions 4 to 79 (NSHYFYVLSC…KKLSRKNKER (76 aa)) constitute a GIY-YIG domain.

It belongs to the UPF0213 family.

The chain is UPF0213 protein BLi00048/BL00536 from Bacillus licheniformis (strain ATCC 14580 / DSM 13 / JCM 2505 / CCUG 7422 / NBRC 12200 / NCIMB 9375 / NCTC 10341 / NRRL NRS-1264 / Gibson 46).